A 174-amino-acid chain; its full sequence is uncharacterized protein (174 aa).

It belongs to the mimivirus L39/R874 family.

This is an uncharacterized protein from Acanthamoeba polyphaga (Amoeba).